Here is a 296-residue protein sequence, read N- to C-terminus: Probable xyloglucan endotransglucosylase/hydrolase 1 (296 aa).

The signal sequence occupies residues 1-22; sequence MGIIKGVLFSIVLINLSLVVFC. The GH16 domain maps to 23-221; it reads GYPRRPVDVP…WANAPFTASY (199 aa). The active-site Nucleophile is glutamate 107. The active-site Proton donor is glutamate 111. Glutamate 111 is a xyloglucan binding site. An N-linked (GlcNAc...) asparagine glycan is attached at asparagine 115. Xyloglucan contacts are provided by residues 124–126, 134–136, 200–201, and glycine 205; these read QTN, NRE, and DW. Disulfide bonds link cysteine 229/cysteine 240 and cysteine 277/cysteine 290. Arginine 282 contributes to the xyloglucan binding site.

It belongs to the glycosyl hydrolase 16 family. XTH group 1 subfamily. In terms of processing, contains at least one intrachain disulfide bond essential for its enzymatic activity.

It is found in the secreted. Its subcellular location is the cell wall. The protein localises to the extracellular space. The protein resides in the apoplast. It carries out the reaction breaks a beta-(1-&gt;4) bond in the backbone of a xyloglucan and transfers the xyloglucanyl segment on to O-4 of the non-reducing terminal glucose residue of an acceptor, which can be a xyloglucan or an oligosaccharide of xyloglucan.. Catalyzes xyloglucan endohydrolysis (XEH) and/or endotransglycosylation (XET). Cleaves and religates xyloglucan polymers, an essential constituent of the primary cell wall, and thereby participates in cell wall construction of growing tissues. The sequence is that of Probable xyloglucan endotransglucosylase/hydrolase 1 (XTH1) from Solanum lycopersicum (Tomato).